Consider the following 115-residue polypeptide: Large ribosomal subunit protein bL19 (115 aa).

Belongs to the bacterial ribosomal protein bL19 family.

Functionally, this protein is located at the 30S-50S ribosomal subunit interface and may play a role in the structure and function of the aminoacyl-tRNA binding site. The polypeptide is Large ribosomal subunit protein bL19 (Finegoldia magna (strain ATCC 29328 / DSM 20472 / WAL 2508) (Peptostreptococcus magnus)).